The primary structure comprises 1024 residues: MSNAKERKHAKKMRNQPTNVTLSSGFVADRGVKHHSGGEKPFQAQKQEPHPGTSRQRQTRVNPHSLPDPEVNEQSSSKGMFRKKGGWKAGPEGTSQEIPKYITASTFAQARAAEISAMLKAVTQKSSNSLVFQTLPRHMRRRAMSHNVKRLPRRLQEIAQKEAEKAVHQKKEHSKNKCHKARRCHMNRTLEFNRRQKKNIWLETHIWHAKRFHMVKKWGYCLGERPTVKSHRACYRAMTNRCLLQDLSYYCCLELKGKEEEILKALSGMCNIDTGLTFAAVHCLSGKRQGSLVLYRVNKYPREMLGPVTFIWKSQRTPGDPSESRQLWIWLHPTLKQDILEEIKAACQCVEPIKSAVCIADPLPTPSQEKSQTELPDEKIGKKRKRKDDGENAKPIKKIIGDGTRDPCLPYSWISPTTGIIISDLTMEMNRFRLIGPLSHSILTEAIKAASVHTVGEDTEETPHRWWIETCKKPDSVSLHCRQEAIFELLGGITSPAEIPAGTILGLTVGDPRINLPQKKSKALPNPEKCQDNEKVRQLLLEGVPVECTHSFIWNQDICKSVTENKISDQDLNRMRSELLVPGSQLILGPHESKIPILLIQQPGKVTGEDRLGWGSGWDVLLPKGWGMAFWIPFIYRGVRVGGLKESAVHSQYKRSPNVPGDFPDCPAGMLFAEEQAKNLLEKYKRRPPAKRPNYVKLGTLAPFCCPWEQLTQDWESRVQAYEEPSVASSPNGKESDLRRSEVPCAPMPKKTHQPSDEVGTSIEHPREAEEVMDAGCQESAGPERITDQEASENHVAATGSHLCVLRSRKLLKQLSAWCGPSSEDSRGGRRAPGRGQQGLTREACLSILGHFPRALVWVSLSLLSKGSPEPHTMICVPAKEDFLQLHEDWHYCGPQESKHSDPFRSKILKQKEKKKREKRQKPGRASSDGPAGEEPVAGQEALTLGLWSGPLPRVTLHCSRTLLGFVTQGDFSMAVGCGEALGFVSLTGLLDMLSSQPAAQRGLVLLRPPASLQYRFARIAIEV.

Over residues 1–14 (MSNAKERKHAKKMR) the composition is skewed to basic residues. 2 disordered regions span residues 1–95 (MSNA…EGTS) and 365–399 (TPSQEKSQTELPDEKIGKKRKRKDDGENAKPIKKI). Composition is skewed to polar residues over residues 15 to 24 (NQPTNVTLSS) and 53 to 62 (TSRQRQTRVN). A Phosphoserine modification is found at Ser-367. Basic and acidic residues predominate over residues 387-399 (KDDGENAKPIKKI). A phosphoserine mark is found at Ser-584, Ser-729, and Ser-730. 4 disordered regions span residues 722 to 762 (YEEP…VGTS), 773 to 792 (MDAGCQESAGPERITDQEAS), 819 to 838 (CGPSSEDSRGGRRAPGRGQQ), and 911 to 936 (QKEKKKREKRQKPGRASSDGPAGEEP). The span at 911-923 (QKEKKKREKRQKP) shows a compositional bias: basic residues.

As to quaternary structure, component of nuclear RNase P and RNase MRP ribonucleoproteins. RNase P consists of a catalytic RNA moiety and 10 different protein chains; POP1, POP4, POP5, POP7, RPP14, RPP21, RPP25, RPP30, RPP38 and RPP40. Within the RNase P complex, POP1, POP7 and RPP25 form the 'finger' subcomplex, POP5, RPP14, RPP40 and homodimeric RPP30 form the 'palm' subcomplex, and RPP21, POP4 and RPP38 form the 'wrist' subcomplex. All subunits of the RNase P complex interact with the catalytic RNA. Several subunits of RNase P are also part of the RNase MRP complex. RNase MRP consists of a catalytic RNA moiety and about 8 protein subunits; POP1, POP7, RPP25, RPP30, RPP38, RPP40 and possibly also POP4 and POP5.

It localises to the nucleus. Its subcellular location is the nucleolus. In terms of biological role, component of ribonuclease P, a ribonucleoprotein complex that generates mature tRNA molecules by cleaving their 5'-ends. Also a component of the MRP ribonuclease complex, which cleaves pre-rRNA sequences. This is Ribonucleases P/MRP protein subunit POP1 (POP1) from Homo sapiens (Human).